We begin with the raw amino-acid sequence, 76 residues long: Antimicrobial peptide lumbricin-1 (76 aa).

Residues 1 to 14 (MSLCISDYLYLTLT) constitute a propeptide, removed in mature form.

Displays antimicrobial activity against the Gram-positive bacteria B.subtilis ATCC 62037, S.aureus ATCC 15752 and S.mutans ATCC 25175, the Gram-negative bacteria E.coli ATCC 27325, P.putida ATCC 17426 and Serratia sp. ATCC 21074, and the fungi C.albicans ATCC 10231, C.neoformans ATCC 34881 and S.cerevisiae ATCC 44774. Does not possess hemolytic activity. The chain is Antimicrobial peptide lumbricin-1 from Lumbricus rubellus (Humus earthworm).